Consider the following 97-residue polypeptide: Biogenesis of lysosome-related organelles complex 1 subunit SNN1 (97 aa).

The stretch at 45–97 (VVRLKQIRNLLKEEQEYYNEEEGLGVERERLEELELRVEKLTQKYKKLLADCV) forms a coiled coil.

The protein belongs to the SNAPIN family. In terms of assembly, component of the biogenesis of lysosome-related organelles complex-1 (BLOC-1).

The protein resides in the endosome. Functionally, component of the biogenesis of lysosome-related organelles complex-1 (BLOC-1), a complex involved in endosomal cargo sorting. This chain is Biogenesis of lysosome-related organelles complex 1 subunit SNN1 (SNN1), found in Lachancea thermotolerans (strain ATCC 56472 / CBS 6340 / NRRL Y-8284) (Yeast).